Reading from the N-terminus, the 206-residue chain is ATP-dependent Clp protease proteolytic subunit (206 aa).

S107 (nucleophile) is an active-site residue. The active site involves H132.

The protein belongs to the peptidase S14 family. Fourteen ClpP subunits assemble into 2 heptameric rings which stack back to back to give a disk-like structure with a central cavity, resembling the structure of eukaryotic proteasomes.

The protein resides in the cytoplasm. It catalyses the reaction Hydrolysis of proteins to small peptides in the presence of ATP and magnesium. alpha-casein is the usual test substrate. In the absence of ATP, only oligopeptides shorter than five residues are hydrolyzed (such as succinyl-Leu-Tyr-|-NHMec, and Leu-Tyr-Leu-|-Tyr-Trp, in which cleavage of the -Tyr-|-Leu- and -Tyr-|-Trp bonds also occurs).. In terms of biological role, cleaves peptides in various proteins in a process that requires ATP hydrolysis. Has a chymotrypsin-like activity. Plays a major role in the degradation of misfolded proteins. The polypeptide is ATP-dependent Clp protease proteolytic subunit (Idiomarina loihiensis (strain ATCC BAA-735 / DSM 15497 / L2-TR)).